A 235-amino-acid chain; its full sequence is Post-translational flagellin modification protein B (235 aa).

Belongs to the CMP-NeuNAc synthase family.

Functionally, required for biosynthesis of LAH modification in the post-translational modification of Campylobacter coli flagellin. The chain is Post-translational flagellin modification protein B (ptmB) from Campylobacter coli.